The chain runs to 240 residues: MSAPLSLFVTGTDTEIGKTFVSAALLHGFARAGLRAAAMKPVAAGAYERDGAWRNEDADQLDAAANVALPAAIRTPFLLKAPAAPHIVAAREGVALDIGTIVDAHRRACEMADVIVVEGVGGFRVPLADTRDTADLAVALGLPVVLVVGVRLGCISHALLTAEAIAARGLPLAGWVANRIDPAMPFADDNVDTLRAWLEREHRAPLLGALAHMSPPSPDAASHALDVNLLLNALRAAAPR.

15 to 20 (EIGKTF) is an ATP binding site. Mg(2+) is bound at residue threonine 19. Lysine 40 is an active-site residue. ATP contacts are provided by residues aspartate 57, 118–121 (EGVG), and 178–179 (NR). Mg(2+) is bound by residues aspartate 57 and glutamate 118.

Belongs to the dethiobiotin synthetase family. Homodimer. The cofactor is Mg(2+).

It localises to the cytoplasm. The enzyme catalyses (7R,8S)-7,8-diammoniononanoate + CO2 + ATP = (4R,5S)-dethiobiotin + ADP + phosphate + 3 H(+). Its pathway is cofactor biosynthesis; biotin biosynthesis; biotin from 7,8-diaminononanoate: step 1/2. In terms of biological role, catalyzes a mechanistically unusual reaction, the ATP-dependent insertion of CO2 between the N7 and N8 nitrogen atoms of 7,8-diaminopelargonic acid (DAPA, also called 7,8-diammoniononanoate) to form a ureido ring. The protein is ATP-dependent dethiobiotin synthetase BioD of Burkholderia pseudomallei (strain 1106a).